The primary structure comprises 165 residues: NADPH-dependent 7-cyano-7-deazaguanine reductase (165 aa).

Catalysis depends on Cys-56, which acts as the Thioimide intermediate. Residue Asp-63 is the Proton donor of the active site. Residues 78–80 (VES) and 97–98 (HE) each bind substrate.

The protein belongs to the GTP cyclohydrolase I family. QueF type 1 subfamily.

The protein localises to the cytoplasm. The enzyme catalyses 7-aminomethyl-7-carbaguanine + 2 NADP(+) = 7-cyano-7-deazaguanine + 2 NADPH + 3 H(+). Its pathway is tRNA modification; tRNA-queuosine biosynthesis. Its function is as follows. Catalyzes the NADPH-dependent reduction of 7-cyano-7-deazaguanine (preQ0) to 7-aminomethyl-7-deazaguanine (preQ1). The protein is NADPH-dependent 7-cyano-7-deazaguanine reductase of Bacillus cytotoxicus (strain DSM 22905 / CIP 110041 / 391-98 / NVH 391-98).